An 810-amino-acid chain; its full sequence is DNA ligase (810 aa).

NAD(+)-binding positions include 46–50 (DAEYD), 95–96 (SL), and glutamate 129. Lysine 131 acts as the N6-AMP-lysine intermediate in catalysis. Residues arginine 152, glutamate 189, lysine 305, and lysine 329 each contribute to the NAD(+) site. Zn(2+) contacts are provided by cysteine 434, cysteine 437, cysteine 458, and cysteine 464. The tract at residues 528–548 (ERRAESGTAEPPKKAAKKKGD) is disordered. The 80-residue stretch at 731 to 810 (AAASTFAGKT…DDWLAMVAQG (80 aa)) folds into the BRCT domain.

The protein belongs to the NAD-dependent DNA ligase family. LigA subfamily. Mg(2+) serves as cofactor. It depends on Mn(2+) as a cofactor.

The enzyme catalyses NAD(+) + (deoxyribonucleotide)n-3'-hydroxyl + 5'-phospho-(deoxyribonucleotide)m = (deoxyribonucleotide)n+m + AMP + beta-nicotinamide D-nucleotide.. In terms of biological role, DNA ligase that catalyzes the formation of phosphodiester linkages between 5'-phosphoryl and 3'-hydroxyl groups in double-stranded DNA using NAD as a coenzyme and as the energy source for the reaction. It is essential for DNA replication and repair of damaged DNA. This chain is DNA ligase, found in Methylobacterium radiotolerans (strain ATCC 27329 / DSM 1819 / JCM 2831 / NBRC 15690 / NCIMB 10815 / 0-1).